Reading from the N-terminus, the 122-residue chain is Large ribosomal subunit protein uL14 (122 aa).

It belongs to the universal ribosomal protein uL14 family. In terms of assembly, part of the 50S ribosomal subunit. Forms a cluster with proteins L3 and L19. In the 70S ribosome, L14 and L19 interact and together make contacts with the 16S rRNA in bridges B5 and B8.

Binds to 23S rRNA. Forms part of two intersubunit bridges in the 70S ribosome. The protein is Large ribosomal subunit protein uL14 of Levilactobacillus brevis (strain ATCC 367 / BCRC 12310 / CIP 105137 / JCM 1170 / LMG 11437 / NCIMB 947 / NCTC 947) (Lactobacillus brevis).